Consider the following 555-residue polypeptide: F-box only protein 33 (555 aa).

Residues 65 to 111 enclose the F-box domain; the sequence is AAGAASLPSELIVHIFSFLPAPDRLRASASCSHWRECLFYPALWPQL.

Part of the SCF (SKP1-CUL1-F-box) E3 ubiquitin-protein ligase complex SCF(FBXO33) formed of CUL1, SKP1, RBX1 and FBXO33. Interacts via its N-terminus with YBX1 CSD domain. Directly interacts with SKP1 and CUL1.

The protein operates within protein modification; protein ubiquitination. In terms of biological role, substrate recognition component of a SCF (SKP1-CUL1-F-box protein) E3 ubiquitin-protein ligase complex which mediates the ubiquitination and subsequent proteasomal degradation of target proteins. Probably recognizes and binds to phosphorylated target proteins. Recognizes YBX1. This Homo sapiens (Human) protein is F-box only protein 33 (FBXO33).